The sequence spans 1053 residues: Prestalk protein (1053 aa).

Residues 1–18 (MNKIYLILILFTFVGIIL) form the signal peptide. Residues 38-60 (NKCTLDKCNNGCCSNTPININDN) form an X-1 repeat. Positions 38 to 1019 (NKCTLDKCNN…VHTPVDCNDN (982 aa)) are 41 X 24 AA tandem repeats, Cys-rich. An X-2 repeat occupies 61–84 (DECTVDTCNPKTGISHTPVNCDDG). The stretch at 85 to 108 (NSCTADSCLCGKGCQHVPIACDDN) is one X-3 repeat. The A-1 repeat unit spans residues 109–132 (NACTVDSCSNSTGCCHTPLSCDDN). The stretch at 133 to 156 (NPCTVDSCSNSTGCCHTPINVDDH) is one A-2 repeat. Residues 157–180 (NACTEDKCTQSGGVTHTPIACDDK) form a B-1 repeat. Residues 181 to 204 (NACTVDSCSNSTGCCHTPLSCDDN) form an A-3 repeat. One copy of the A-4 repeat lies at 205–228 (NACTVDSCSNSTGCVHTPINVDDH). One copy of the B-2 repeat lies at 229–252 (NACTEDKCTQSGGVTHTPIACDDK). One copy of the A-5 repeat lies at 253–276 (NACTADSCSNSTGCCHTPITCDDN). An A-6 repeat occupies 277-300 (NACTVDSCSNSTGCCHTPINVDDN). A B-3 repeat occupies 301–324 (NACTEDKCTQSGGVTHTPIACDDK). The stretch at 325–348 (NACTVDSCSNSTGCVHTPLACDDK) is one A-7 repeat. The A-8 repeat unit spans residues 349–372 (NPCTVDSCSNSTGCCHTPINVDDN). One copy of the B-4 repeat lies at 373–396 (NACTEDKCTQSGGVTHTPINCDDN). Residues 397–420 (NKCTVDSCSNSTGCCHTPMSCDDN) form an A-9 repeat. The A-10 repeat unit spans residues 421-444 (NPCTVDSCSNSTGCVHTPINVDDN). The stretch at 445–468 (NACTEDKCTQNGGVTHTPIACDDK) is one B-5 repeat. One copy of the A-11 repeat lies at 469–492 (NACTVDSCSNSTGCCHTPLKCDDN). The A-12 repeat unit spans residues 493 to 516 (NACTVDSCSNSTGCVHTPINVDDN). A B-6 repeat occupies 517–540 (NACTEDKCTQSGGVTHTPISCDDK). Residues 541–564 (NPCTIDSCSNSTGCVHTPMSCDDR) form an A-13 repeat. One copy of the X-4 repeat lies at 565–588 (NPCTSDFCSWEKGCQHVALSCNDF). Residues 589-612 (NACTMDSCSNSTGCTHTPIACDDK) form an A-14 repeat. The stretch at 613-636 (NACTVDSCSNSTGCVHTPLTCDDN) is one A-15 repeat. An A-16 repeat occupies 637-660 (NPCTVDSCSNSTGCCHTPINVDDH). A B-7 repeat occupies 661–684 (NACTEDKCTQSGGVTHTPIACDDK). Residues 685-708 (NACTVDSCSNSTGCCHTPLSCDDN) form an A-17 repeat. One copy of the A-18 repeat lies at 709–732 (NACTVDSCSNSTGCVHTPINVDDN). The B-8 repeat unit spans residues 733–756 (NACTEDKCTQNGGVTHTPIACDDK). The stretch at 757 to 780 (NACTVDSCSNSTGCCHTPLKCDDN) is one A-19 repeat. The A-20 repeat unit spans residues 781 to 804 (NPCTVDSCSNSTGCVHTPMNVDDN). A B-9 repeat occupies 805 to 828 (NACTEDKCTQNGGVTHTPIRCDDL). The A-21 repeat unit spans residues 829–852 (NSCTADSCSNSTGCVHTPINCDDN). Residues 853 to 876 (NKCTADSCSNSTGCCHTPISCDDN) form an A-22 repeat. The A-23 repeat unit spans residues 877–900 (NPCTVDSCSNSTGCCHTPINVDDN). A B-10 repeat occupies 901-924 (NPCTEDKCTQSGGVTHTPIGCNDN). Residues 925–948 (NACTVDSCSNSTGCTHTPMKCDDN) form an A-24 repeat. An A-25 repeat occupies 949–971 (NPCTIDSCSNSTGCVHTPMNCDD). Residues 972 to 995 (GNFCTLDSCCSTGCTHTPIIIDDN) form an A-26 repeat. The stretch at 996 to 1019 (NPCTVDSCCNSTGVVHTPVDCNDN) is one A-27 repeat.

The protein localises to the secreted. The protein resides in the extracellular space. It localises to the extracellular matrix. Functionally, component of the stalk tube, the matrix that encases stalk cells. This is Prestalk protein (ecmB) from Dictyostelium discoideum (Social amoeba).